An 878-amino-acid polypeptide reads, in one-letter code: Alanine--tRNA ligase (878 aa).

Residues His-567, His-571, Cys-669, and His-673 each coordinate Zn(2+).

The protein belongs to the class-II aminoacyl-tRNA synthetase family. It depends on Zn(2+) as a cofactor.

The protein localises to the cytoplasm. It carries out the reaction tRNA(Ala) + L-alanine + ATP = L-alanyl-tRNA(Ala) + AMP + diphosphate. Functionally, catalyzes the attachment of alanine to tRNA(Ala) in a two-step reaction: alanine is first activated by ATP to form Ala-AMP and then transferred to the acceptor end of tRNA(Ala). Also edits incorrectly charged Ser-tRNA(Ala) and Gly-tRNA(Ala) via its editing domain. In Rickettsia akari (strain Hartford), this protein is Alanine--tRNA ligase.